We begin with the raw amino-acid sequence, 572 residues long: Hemolysin-1 (572 aa).

Functionally, bacterial hemolysins are exotoxins that attack blood cell membranes and cause cell rupture by mechanisms not clearly defined. In Aeromonas salmonicida, this protein is Hemolysin-1 (ash1).